A 141-amino-acid chain; its full sequence is Large-conductance mechanosensitive channel (141 aa).

The next 3 helical transmembrane spans lie at 16 to 36 (VIDL…VDSV), 40 to 60 (LIMP…MFIV), and 86 to 106 (GNFL…FLMV).

Belongs to the MscL family. Homopentamer.

It is found in the cell inner membrane. Functionally, channel that opens in response to stretch forces in the membrane lipid bilayer. May participate in the regulation of osmotic pressure changes within the cell. The chain is Large-conductance mechanosensitive channel from Cupriavidus necator (strain ATCC 17699 / DSM 428 / KCTC 22496 / NCIMB 10442 / H16 / Stanier 337) (Ralstonia eutropha).